The chain runs to 278 residues: Urease accessory protein UreD (278 aa).

Belongs to the UreD family. UreD, UreF and UreG form a complex that acts as a GTP-hydrolysis-dependent molecular chaperone, activating the urease apoprotein by helping to assemble the nickel containing metallocenter of UreC. The UreE protein probably delivers the nickel.

It localises to the cytoplasm. Required for maturation of urease via the functional incorporation of the urease nickel metallocenter. This chain is Urease accessory protein UreD, found in Escherichia coli.